Here is a 508-residue protein sequence, read N- to C-terminus: Pancreatic alpha-amylase (508 aa).

The first 15 residues, 1–15 (MKFVLLLSLIGFCWA), serve as a signal peptide directing secretion. A Pyrrolidone carboxylic acid modification is found at Q16. 3 disulfide bridges follow: C43–C101, C85–C130, and C156–C172. Ca(2+) is bound by residues N115, R170, and D179. R207 lines the chloride pocket. The active-site Nucleophile is the D209. H213 contacts Ca(2+). E245 (proton donor) is an active-site residue. Chloride is bound by residues N310 and R349. 2 disulfide bridges follow: C390-C396 and C462-C474.

The protein belongs to the glycosyl hydrolase 13 family. In terms of assembly, monomer. Ca(2+) is required as a cofactor. The cofactor is chloride.

Its subcellular location is the secreted. It is found in the extracellular space. It catalyses the reaction Endohydrolysis of (1-&gt;4)-alpha-D-glucosidic linkages in polysaccharides containing three or more (1-&gt;4)-alpha-linked D-glucose units.. The polypeptide is Pancreatic alpha-amylase (Amy2) (Rattus norvegicus (Rat)).